A 392-amino-acid polypeptide reads, in one-letter code: Protein PrgH (392 aa).

Residues isoleucine 142–isoleucine 162 form a helical membrane-spanning segment.

It localises to the cell membrane. In terms of biological role, required for invasion of epithelial cells. The protein is Protein PrgH (prgH) of Salmonella typhimurium (strain LT2 / SGSC1412 / ATCC 700720).